The sequence spans 446 residues: Gamma-glutamyl phosphate reductase (446 aa).

Belongs to the gamma-glutamyl phosphate reductase family.

It is found in the cytoplasm. The enzyme catalyses L-glutamate 5-semialdehyde + phosphate + NADP(+) = L-glutamyl 5-phosphate + NADPH + H(+). It functions in the pathway amino-acid biosynthesis; L-proline biosynthesis; L-glutamate 5-semialdehyde from L-glutamate: step 2/2. In terms of biological role, catalyzes the NADPH-dependent reduction of L-glutamate 5-phosphate into L-glutamate 5-semialdehyde and phosphate. The product spontaneously undergoes cyclization to form 1-pyrroline-5-carboxylate. This chain is Gamma-glutamyl phosphate reductase, found in Sulfurihydrogenibium sp. (strain YO3AOP1).